A 223-amino-acid chain; its full sequence is Phosphoribosylformylglycinamidine synthase subunit PurQ (223 aa).

One can recognise a Glutamine amidotransferase type-1 domain in the interval 3-223 (SAVVQLPGLN…FASALDVIAA (221 aa)). Cys86 acts as the Nucleophile in catalysis. Active-site residues include His196 and Glu198.

Part of the FGAM synthase complex composed of 1 PurL, 1 PurQ and 2 PurS subunits.

The protein localises to the cytoplasm. The catalysed reaction is N(2)-formyl-N(1)-(5-phospho-beta-D-ribosyl)glycinamide + L-glutamine + ATP + H2O = 2-formamido-N(1)-(5-O-phospho-beta-D-ribosyl)acetamidine + L-glutamate + ADP + phosphate + H(+). It carries out the reaction L-glutamine + H2O = L-glutamate + NH4(+). It functions in the pathway purine metabolism; IMP biosynthesis via de novo pathway; 5-amino-1-(5-phospho-D-ribosyl)imidazole from N(2)-formyl-N(1)-(5-phospho-D-ribosyl)glycinamide: step 1/2. In terms of biological role, part of the phosphoribosylformylglycinamidine synthase complex involved in the purines biosynthetic pathway. Catalyzes the ATP-dependent conversion of formylglycinamide ribonucleotide (FGAR) and glutamine to yield formylglycinamidine ribonucleotide (FGAM) and glutamate. The FGAM synthase complex is composed of three subunits. PurQ produces an ammonia molecule by converting glutamine to glutamate. PurL transfers the ammonia molecule to FGAR to form FGAM in an ATP-dependent manner. PurS interacts with PurQ and PurL and is thought to assist in the transfer of the ammonia molecule from PurQ to PurL. This is Phosphoribosylformylglycinamidine synthase subunit PurQ from Rhizobium johnstonii (strain DSM 114642 / LMG 32736 / 3841) (Rhizobium leguminosarum bv. viciae).